Reading from the N-terminus, the 283-residue chain is Phosphatidylglycerol--prolipoprotein diacylglyceryl transferase (283 aa).

The next 4 membrane-spanning stretches (helical) occupy residues 20–40, 51–71, 97–117, and 123–143; these read LGPVPIRAYALCIIVGIFVAM, GGNPDLVIDAGIVAVIAGIIG, ITNGGLGIWGAVALGTIAVYF, and GVAFALFADAVAPGIILAQAI. Residue arginine 145 coordinates a 1,2-diacyl-sn-glycero-3-phospho-(1'-sn-glycerol). 2 helical membrane passes run 192–212 and 255–275; these read VHPTFLYEMIWNLVIFAVLLW and INVIVSVVVCAIAVGALFALR.

This sequence belongs to the Lgt family.

Its subcellular location is the cell membrane. The catalysed reaction is L-cysteinyl-[prolipoprotein] + a 1,2-diacyl-sn-glycero-3-phospho-(1'-sn-glycerol) = an S-1,2-diacyl-sn-glyceryl-L-cysteinyl-[prolipoprotein] + sn-glycerol 1-phosphate + H(+). The protein operates within protein modification; lipoprotein biosynthesis (diacylglyceryl transfer). Its function is as follows. Catalyzes the transfer of the diacylglyceryl group from phosphatidylglycerol to the sulfhydryl group of the N-terminal cysteine of a prolipoprotein, the first step in the formation of mature lipoproteins. The sequence is that of Phosphatidylglycerol--prolipoprotein diacylglyceryl transferase from Corynebacterium diphtheriae (strain ATCC 700971 / NCTC 13129 / Biotype gravis).